Here is a 238-residue protein sequence, read N- to C-terminus: MIILPAIDLKGGKCVRLYKGDMNSQEVVARDPFETALKFKSEGAQYLHMVDLDGALKGSGENLDIISKIVKNVDVPIEVGGGIRNIETIDKFIKLGVSRVILGTAALKNKELVIKAVENYDEKIAVGIDAKDGVPAADGWTTLSKTNYIDFGKEMEKIGVQTLIFTDISKDGTLEGTNLEQLLKLKNSVKCNVIASGGIKDIEDIKSLKKENVYGAIVGKAIYAKTLSLKKAIEIGGN.

The Proton acceptor role is filled by D8. D129 functions as the Proton donor in the catalytic mechanism.

It belongs to the HisA/HisF family.

Its subcellular location is the cytoplasm. The enzyme catalyses 1-(5-phospho-beta-D-ribosyl)-5-[(5-phospho-beta-D-ribosylamino)methylideneamino]imidazole-4-carboxamide = 5-[(5-phospho-1-deoxy-D-ribulos-1-ylimino)methylamino]-1-(5-phospho-beta-D-ribosyl)imidazole-4-carboxamide. The protein operates within amino-acid biosynthesis; L-histidine biosynthesis; L-histidine from 5-phospho-alpha-D-ribose 1-diphosphate: step 4/9. The polypeptide is 1-(5-phosphoribosyl)-5-[(5-phosphoribosylamino)methylideneamino] imidazole-4-carboxamide isomerase (Clostridium kluyveri (strain NBRC 12016)).